Here is a 578-residue protein sequence, read N- to C-terminus: PX domain-containing protein kinase-like protein (578 aa).

One can recognise a PX domain in the interval 14–126; that stretch reads LDDTVPLTAA…KFLDPNNYSA (113 aa). The 394-residue stretch at 88–481 folds into the Protein kinase domain; it reads FIAERQKGLQ…LENSEEHSAK (394 aa). 2 stretches are compositionally biased toward basic residues: residues 437-448 and 457-469; these read IHQHRRLTRAQS and KKRKILARKKSKR. Disordered regions lie at residues 437–548 and 559–578; these read IHQH…NGMS and FQKGTLRKAKTCDHSAPKIG. Over residues 483–513 the composition is skewed to low complexity; that stretch reads SNSNNSAGSGASSPLTSPSSPTPPSTSGISA. Residues 514-530 show a composition bias toward pro residues; it reads LPPPPPPPPPPAAPLPP. The WH2 domain maps to 548 to 567; it reads SRGALLSSIQNFQKGTLRKA. A compositionally biased stretch (basic and acidic residues) spans 568-578; that stretch reads KTCDHSAPKIG.

Belongs to the protein kinase superfamily. Widely expressed in all tissues examined except in heart. Isoform 1 is expressed in high levels in the brain, skeletal muscle, spleen and testis. Isoform 7 expression has yet to be demonstrated.

It localises to the cytoplasm. The protein localises to the cell membrane. Its function is as follows. Binds to and modulates brain Na,K-ATPase subunits ATP1B1 and ATP1B3 and may thereby participate in the regulation of electrical excitability and synaptic transmission. May not display kinase activity. This is PX domain-containing protein kinase-like protein from Homo sapiens (Human).